Reading from the N-terminus, the 439-residue chain is Ribosomal protein uS12 methylthiotransferase RimO (439 aa).

One can recognise an MTTase N-terminal domain in the interval 7–119; it reads KQLCLISLGC…IDIMIAKKQN (113 aa). 6 residues coordinate [4Fe-4S] cluster: cysteine 16, cysteine 50, cysteine 82, cysteine 151, cysteine 155, and cysteine 158. A Radical SAM core domain is found at 137–365; sequence TGSSVHAYVK…NKIALKHQNN (229 aa).

Belongs to the methylthiotransferase family. RimO subfamily. [4Fe-4S] cluster is required as a cofactor.

Its subcellular location is the cytoplasm. It carries out the reaction L-aspartate(89)-[ribosomal protein uS12]-hydrogen + (sulfur carrier)-SH + AH2 + 2 S-adenosyl-L-methionine = 3-methylsulfanyl-L-aspartate(89)-[ribosomal protein uS12]-hydrogen + (sulfur carrier)-H + 5'-deoxyadenosine + L-methionine + A + S-adenosyl-L-homocysteine + 2 H(+). Functionally, catalyzes the methylthiolation of an aspartic acid residue of ribosomal protein uS12. The polypeptide is Ribosomal protein uS12 methylthiotransferase RimO (Helicobacter pylori (strain Shi470)).